A 121-amino-acid chain; its full sequence is Putative iron-sulfur cluster insertion protein ErpA (121 aa).

Iron-sulfur cluster-binding residues include Cys-49, Cys-113, and Cys-115.

It belongs to the HesB/IscA family. As to quaternary structure, homodimer. The cofactor is iron-sulfur cluster.

Required for insertion of 4Fe-4S clusters. The polypeptide is Putative iron-sulfur cluster insertion protein ErpA (Polaromonas sp. (strain JS666 / ATCC BAA-500)).